Reading from the N-terminus, the 454-residue chain is Capsid vertex component 1 (454 aa).

Residues 197-227 (TVRGESLDPPVSQKGPARTRHRPPPVRLSFN) form a disordered region.

This sequence belongs to the herpesviridae CVC1 protein family. In terms of assembly, interacts (via C-terminus) with capsid vertex component 2/CVC2.

It is found in the virion. Its subcellular location is the host nucleus. Its function is as follows. Capsid vertex-specific component that plays a role during viral DNA encapsidation, assuring correct genome cleavage and presumably stabilizing capsids that contain full-length viral genomes. In Human herpesvirus 8 type P (isolate GK18) (HHV-8), this protein is Capsid vertex component 1.